Consider the following 465-residue polypeptide: Mitochondrial-processing peptidase subunit beta (465 aa).

His79 is a Zn(2+) binding site. Glu82 (proton acceptor) is an active-site residue. His83 and Glu159 together coordinate Zn(2+).

Belongs to the peptidase M16 family. Heterodimer of an alpha subunit and a beta subunit subunits, forming the mitochondrial processing protease (MPP) in which the alpha subunit is involved in substrate recognition and binding and the beta subunit is the catalytic subunit. Requires Zn(2+) as cofactor.

The protein resides in the mitochondrion matrix. It carries out the reaction Release of N-terminal transit peptides from precursor proteins imported into the mitochondrion, typically with Arg in position P2.. With respect to regulation, binding to the alpha subunit is required for catalytic activity. In terms of biological role, catalytic subunit of the essential mitochondrial processing protease (MPP), which cleaves the mitochondrial sequence off newly imported precursors proteins. Preferentially, cleaves after an arginine at position P2. This is Mitochondrial-processing peptidase subunit beta (MPP1) from Blastocladiella emersonii (Aquatic fungus).